We begin with the raw amino-acid sequence, 281 residues long: Diaminopimelate epimerase (281 aa).

The substrate site is built by Asn-13, Gln-46, and Asn-66. Cys-75 serves as the catalytic Proton donor. Substrate contacts are provided by residues 76 to 77 (GN), Asn-160, Asn-193, and 211 to 212 (ER). Catalysis depends on Cys-220, which acts as the Proton acceptor. Position 221–222 (221–222 (GT)) interacts with substrate.

Belongs to the diaminopimelate epimerase family. Homodimer.

It is found in the cytoplasm. It carries out the reaction (2S,6S)-2,6-diaminopimelate = meso-2,6-diaminopimelate. It functions in the pathway amino-acid biosynthesis; L-lysine biosynthesis via DAP pathway; DL-2,6-diaminopimelate from LL-2,6-diaminopimelate: step 1/1. Catalyzes the stereoinversion of LL-2,6-diaminopimelate (L,L-DAP) to meso-diaminopimelate (meso-DAP), a precursor of L-lysine and an essential component of the bacterial peptidoglycan. In Acinetobacter baumannii (strain AB307-0294), this protein is Diaminopimelate epimerase.